An 878-amino-acid chain; its full sequence is RNA-directed RNA polymerase (878 aa).

258-265 (GLPYVGRT) is a GTP binding site. The region spanning 397 to 597 (LVYADNIYIV…DKERLFCSAA (201 aa)) is the RdRp catalytic domain. The segment at 845 to 878 (GAGTSRPMGMEAPTRSKNAVKMAKRAQRQKESRQ) is disordered.

Interacts with VP3 in the cytoplasm. In terms of processing, may exist in multiple phosphorylated forms.

Its subcellular location is the virion. The enzyme catalyses RNA(n) + a ribonucleoside 5'-triphosphate = RNA(n+1) + diphosphate. Functionally, RNA-dependent RNA polymerase which is found both free and covalently attached to the genomic RNA. May also contain guanylyl and methyl transferase activities. The chain is RNA-directed RNA polymerase (VP1) from Gallus gallus (Chicken).